We begin with the raw amino-acid sequence, 153 residues long: Ribonuclease H (153 aa).

An RNase H type-1 domain is found at 1–141 (MKLVEIFTDG…CDELAKAGAN (141 aa)). Mg(2+) is bound by residues Asp9, Glu47, Asp69, and Asp133.

Belongs to the RNase H family. In terms of assembly, monomer. Mg(2+) is required as a cofactor.

It is found in the cytoplasm. It catalyses the reaction Endonucleolytic cleavage to 5'-phosphomonoester.. Functionally, endonuclease that specifically degrades the RNA of RNA-DNA hybrids. This is Ribonuclease H from Actinobacillus pleuropneumoniae serotype 5b (strain L20).